The chain runs to 278 residues: Shikimate dehydrogenase (NADP(+)) (278 aa).

Shikimate contacts are provided by residues 19–21 (SFS) and threonine 66. Lysine 70 (proton acceptor) is an active-site residue. 2 residues coordinate shikimate: asparagine 91 and aspartate 106. Residues 130 to 134 (GSGGA) and leucine 222 each bind NADP(+). A shikimate-binding site is contributed by tyrosine 224. Glycine 245 is an NADP(+) binding site.

The protein belongs to the shikimate dehydrogenase family. As to quaternary structure, homodimer.

The catalysed reaction is shikimate + NADP(+) = 3-dehydroshikimate + NADPH + H(+). It functions in the pathway metabolic intermediate biosynthesis; chorismate biosynthesis; chorismate from D-erythrose 4-phosphate and phosphoenolpyruvate: step 4/7. In terms of biological role, involved in the biosynthesis of the chorismate, which leads to the biosynthesis of aromatic amino acids. Catalyzes the reversible NADPH linked reduction of 3-dehydroshikimate (DHSA) to yield shikimate (SA). The chain is Shikimate dehydrogenase (NADP(+)) from Methanococcus maripaludis (strain DSM 14266 / JCM 13030 / NBRC 101832 / S2 / LL).